Here is a 158-residue protein sequence, read N- to C-terminus: SUMO-conjugating enzyme UBC9 (158 aa).

A UBC core domain is found at 4-157; that stretch reads IALSRLAQER…VRAQAKKFAP (154 aa). Residues 13–18 are interaction with SUMO1; that stretch reads RKAWRK. Catalysis depends on C93, which acts as the Glycyl thioester intermediate.

Belongs to the ubiquitin-conjugating enzyme family. Interacts with SOX9.

The protein localises to the nucleus. It localises to the cytoplasm. It participates in protein modification; protein sumoylation. Its function is as follows. Accepts the ubiquitin-like proteins SUMO1, SUMO2 and SUMO3 from the UBLE1A-UBLE1B E1 complex and catalyzes their covalent attachment to other proteins with the help of an E3 ligase such as RANBP2 or CBX4. Essential for nuclear architecture and chromosome segregation. In Gallus gallus (Chicken), this protein is SUMO-conjugating enzyme UBC9 (UBE2I).